The chain runs to 75 residues: Large ribosomal subunit protein bL31 (75 aa).

Belongs to the bacterial ribosomal protein bL31 family. Type A subfamily. In terms of assembly, part of the 50S ribosomal subunit.

Functionally, binds the 23S rRNA. This is Large ribosomal subunit protein bL31 from Chlorobium phaeovibrioides (strain DSM 265 / 1930) (Prosthecochloris vibrioformis (strain DSM 265)).